Reading from the N-terminus, the 192-residue chain is Ribosomal RNA small subunit methyltransferase G (192 aa).

Residues Gly59, 111-112 (IE), and Arg124 contribute to the S-adenosyl-L-methionine site.

The protein belongs to the methyltransferase superfamily. RNA methyltransferase RsmG family.

It localises to the cytoplasm. In terms of biological role, specifically methylates the N7 position of a guanine in 16S rRNA. This is Ribosomal RNA small subunit methyltransferase G from Mycoplasma genitalium (strain ATCC 33530 / DSM 19775 / NCTC 10195 / G37) (Mycoplasmoides genitalium).